Consider the following 329-residue polypeptide: Delta-aminolevulinic acid dehydratase (329 aa).

Catalysis depends on K202, which acts as the Schiff-base intermediate with substrate. 2 residues coordinate 5-aminolevulinate: R212 and R223. Residue E239 coordinates Mg(2+). K254 functions as the Schiff-base intermediate with substrate in the catalytic mechanism. 5-aminolevulinate contacts are provided by S280 and Y319.

This sequence belongs to the ALAD family. In terms of assembly, homooctamer.

The catalysed reaction is 2 5-aminolevulinate = porphobilinogen + 2 H2O + H(+). Its pathway is porphyrin-containing compound metabolism; protoporphyrin-IX biosynthesis; coproporphyrinogen-III from 5-aminolevulinate: step 1/4. Functionally, catalyzes an early step in the biosynthesis of tetrapyrroles. Binds two molecules of 5-aminolevulinate per subunit, each at a distinct site, and catalyzes their condensation to form porphobilinogen. The sequence is that of Delta-aminolevulinic acid dehydratase (hemB) from Mycobacterium leprae (strain TN).